The following is a 63-amino-acid chain: DNA-directed RNA polymerase subunit omega (63 aa).

It belongs to the RNA polymerase subunit omega family. In terms of assembly, the RNAP catalytic core consists of 2 alpha, 1 beta, 1 beta' and 1 omega subunit. When a sigma factor is associated with the core the holoenzyme is formed, which can initiate transcription.

The enzyme catalyses RNA(n) + a ribonucleoside 5'-triphosphate = RNA(n+1) + diphosphate. In terms of biological role, promotes RNA polymerase assembly. Latches the N- and C-terminal regions of the beta' subunit thereby facilitating its interaction with the beta and alpha subunits. The polypeptide is DNA-directed RNA polymerase subunit omega (Blochmanniella pennsylvanica (strain BPEN)).